The following is a 614-amino-acid chain: Ankyrin repeat domain-containing protein 55 (614 aa).

The disordered stretch occupies residues 1–20; it reads MMRQATMDFSTPSVFDQQRG. A compositionally biased stretch (polar residues) spans 7–16; that stretch reads MDFSTPSVFD. ANK repeat units follow at residues 26 to 55, 60 to 89, 93 to 125, 126 to 157, 161 to 190, 194 to 223, 230 to 260, 264 to 293, and 297 to 326; these read VDLT…SILE, EGCT…NINM, YGRT…IPDK, NGRL…EINH, EGMT…DPTL, DFKT…GPSI, SGKT…NLQA, DDRT…DSNL, and NEST…TEPT. Disordered stretches follow at residues 319–339, 354–375, 454–476, and 564–614; these read QESR…PQKK, KKEE…EEDT, TSHA…SRSE, and RNNL…SDEN. A compositionally biased stretch (basic and acidic residues) spans 354-373; the sequence is KKEEQRAHQKDPSRDRYREE. At serine 475 the chain carries Phosphoserine.

The sequence is that of Ankyrin repeat domain-containing protein 55 (ANKRD55) from Homo sapiens (Human).